The chain runs to 645 residues: Sodium/potassium/calcium exchanger 3 (645 aa).

The first 43 residues, 1–43, serve as a signal peptide directing secretion; that stretch reads MPPPGDQDCARRRSRRRRRDLLLSQLCFLASVALLLWSLSSLR. At 44-106 the chain is on the extracellular side; it reads EQKELDLMDL…DIFSNEDRRQ (63 aa). Asparagine 70 and asparagine 85 each carry an N-linked (GlcNAc...) asparagine glycan. Residues 107–127 form a helical membrane-spanning segment; sequence GAVVLHVLCAMYMFYALAIVC. Topologically, residues 128-151 are cytoplasmic; that stretch reads DDFFVPSLEKICERLHLSEDVAGA. One copy of the Alpha-1 repeat lies at 148 to 188; the sequence is VAGATFMAAGSSAPELFTSVIGVFITKGDVGVGTIVGSAVF. A helical membrane pass occupies residues 152–172; the sequence is TFMAAGSSAPELFTSVIGVFI. The Extracellular portion of the chain corresponds to 173 to 181; that stretch reads TKGDVGVGT. The chain crosses the membrane as a helical span at residues 182–202; the sequence is IVGSAVFNILCIIGVCGLFAG. Topologically, residues 203 to 209 are cytoplasmic; the sequence is QVVALSS. A helical membrane pass occupies residues 210–230; sequence WCLLRDSIYYTLSVVALIVFI. Residues 231-234 lie on the Extracellular side of the membrane; it reads YDEK. Residues 235-255 form a helical membrane-spanning segment; the sequence is VSWWESLVLVLMYLIYIVIMK. Topologically, residues 256–486 are cytoplasmic; the sequence is YNACIHQCFE…WFMVTFASST (231 aa). Residue serine 307 is modified to Phosphoserine. 2 disordered regions span residues 379–398 and 404–442; these read TVENGTGPSSAPDRGVNGTR and AETDNETENENEDNENNENDEEEEEDEDDDEGPYTPFDP. A compositionally biased stretch (acidic residues) spans 404–435; the sequence is AETDNETENENEDNENNENDEEEEEDEDDDEG. The helical transmembrane segment at 487–507 threads the bilayer; the sequence is LWIAAFSYMMVWMVTIIGYTL. Topologically, residues 508 to 512 are extracellular; sequence GIPDV. Residues 513-533 traverse the membrane as a helical segment; the sequence is IMGITFLAAGTSVPDCMASLI. An Alpha-2 repeat occupies 520-551; the sequence is AAGTSVPDCMASLIVARQGMGDMAVSNSIGSN. The Cytoplasmic portion of the chain corresponds to 534 to 551; sequence VARQGMGDMAVSNSIGSN. A helical membrane pass occupies residues 552–572; the sequence is VFDILIGLGLPWALQTLAVDY. Residues 573–582 lie on the Extracellular side of the membrane; it reads GSYIRLNSRG. A helical transmembrane segment spans residues 583-603; sequence LIYSVGLLLASVFVTVFGVHL. Topologically, residues 604 to 617 are cytoplasmic; it reads NKWQLDKKLGCGCL. Residues 618–638 form a helical membrane-spanning segment; it reads FLYGVFLCFSIMTEFNVFTFV. Over 639–645 the chain is Extracellular; the sequence is NLPMCGD.

It belongs to the Ca(2+):cation antiporter (CaCA) (TC 2.A.19) family. SLC24A subfamily. As to expression, abundant in the brain. Highest levels found in selected thalamic nuclei, hippocampal CA1 neurons and in layer IV of the cerebral cortex. Expressed in dental tissues.

It is found in the cell membrane. It catalyses the reaction Ca(2+)(out) + K(+)(out) + 4 Na(+)(in) = Ca(2+)(in) + K(+)(in) + 4 Na(+)(out). In terms of biological role, calcium, potassium:sodium antiporter that transports 1 Ca(2+) and 1 K(+) in exchange for 4 Na(+). This Mus musculus (Mouse) protein is Sodium/potassium/calcium exchanger 3 (Slc24a3).